Consider the following 44-residue polypeptide: Phycoerythrin alpha-1 chain (44 aa).

The interval 1–44 is disordered; it reads AMDKSAKAPQITIFDHRGCSRAPKSETGGTATKDDQMMVKVSQV. A 5-hydroxylysine modification is found at Lys4. The 15,16-dihydrobiliverdin site is built by Cys19 and Arg21. Residues 24–26 form a 15,16-dihydrobiliverdin chromophore region; that stretch reads KSE. Position 40 (Lys40) interacts with 15,16-dihydrobiliverdin.

The protein belongs to the phycoerythrin family. As to quaternary structure, heterotetramer of 2 different alpha chains and 2 identical beta chains. The subunit composition could comprise of any combination of 2 out of 4 different alpha units with an invariant beta unit. Post-translationally, contains one covalently linked 15,16-dihydrobiliverdin chromophore.

Its subcellular location is the plastid. The protein localises to the chloroplast thylakoid membrane. In terms of biological role, light-harvesting photosynthetic tetrapyrrole chromophore-protein from the phycobiliprotein complex. In Rhodomonas sp. (strain CS 24) (Chroomonas sp. (strain CS24)), this protein is Phycoerythrin alpha-1 chain (cpeA1).